Consider the following 1868-residue polypeptide: Dedicator of cytokinesis protein 5 (1868 aa).

The SH3 domain maps to 8–69 (KRQKYGVAIY…PETYIHLKEA (62 aa)). S365 is subject to Phosphoserine. Residues 443–627 (RNDIYVTLIH…DSFQIATLIC (185 aa)) enclose the C2 DOCK-type domain. K818 is subject to N6-acetyllysine. The 412-residue stretch at 1231–1642 (YKDKKREDIY…VEKLYGVITL (412 aa)) folds into the DOCKER domain. The span at 1681-1692 (STSSNSSDNASS) shows a compositional bias: low complexity. Disordered stretches follow at residues 1681 to 1730 (STSS…RISK) and 1742 to 1868 (QVIA…PGSQ). Positions 1704–1728 (LFERRASSGARVEDLPPKEDSENRI) are enriched in basic and acidic residues. 5 positions are modified to phosphoserine: S1755, S1765, S1771, S1784, and S1788. T1793 bears the Phosphothreonine mark. A compositionally biased stretch (polar residues) spans 1796 to 1810 (ATRTLSSPSLQTDGL). Phosphoserine occurs at positions 1832 and 1867.

This sequence belongs to the DOCK family. In terms of assembly, interacts with CRK and CRKL. Interacts (via N-terminus) with tensin TNS3 (via N-terminus); the interaction increases DOCK5 guanine nucleotide exchange activity towards Rac. Interacts with ELMO1. As to expression, highly expressed in lens, where it predominantly localizes to anterior epithelial cells, and is weakly expressed in lens fiber (at protein level). Expressed in brain, eye, lung, spleen and kidney, but not in thymus or peripheral blood leukocytes.

It localises to the cytoplasm. The protein resides in the cell membrane. Its subcellular location is the cell projection. It is found in the podosome. Functionally, guanine nucleotide exchange factor (GEF) for Rho and Rac. GEF proteins activate small GTPases by exchanging bound GDP for free GTP. Along with DOCK1, mediates CRK/CRKL regulation of epithelial and endothelial cell spreading and migration on type IV collagen. The polypeptide is Dedicator of cytokinesis protein 5 (Mus musculus (Mouse)).